The primary structure comprises 451 residues: Glycosyltransferase-like At2g41451 (451 aa).

Positions 1–23 (MASSDSSYSRKFLLITFLPLSLA) are cleaved as a signal peptide. 5 N-linked (GlcNAc...) asparagine glycosylation sites follow: Asn36, Asn137, Asn168, Asn441, and Asn444. In terms of domain architecture, GT92 spans 109-345 (QTLPWIFYHK…TYSKFSDLTS (237 aa)).

This sequence belongs to the glycosyltransferase 92 family.

The protein resides in the secreted. It is found in the cell wall. The protein localises to the cytoplasm. Its subcellular location is the cell membrane. Functionally, involved in the coordination between cell elongation and cellulose synthesis by promoting the expression of genes involved in cell elongation and cellulose synthesis. Acts as a regulator of plasmodesmatal permeability. Maybe a glycosyltransferase. In Arabidopsis thaliana (Mouse-ear cress), this protein is Glycosyltransferase-like At2g41451.